We begin with the raw amino-acid sequence, 305 residues long: Cytochrome c biogenesis protein CcsA (305 aa).

8 helical membrane-spanning segments follow: residues 11-31 (ANAS…KAIF), 36-56 (ILQL…ALLL), 75-95 (LMFL…YIQI), 97-117 (FIGF…TFFL), 142-162 (IMMA…AFLF), 212-232 (TIGI…VWAN), 239-259 (WSWD…AIYL), and 273-293 (AIVA…VNLL).

The protein belongs to the CcmF/CycK/Ccl1/NrfE/CcsA family. In terms of assembly, may interact with Ccs1.

It is found in the plastid. The protein localises to the chloroplast thylakoid membrane. Functionally, required during biogenesis of c-type cytochromes (cytochrome c6 and cytochrome f) at the step of heme attachment. The polypeptide is Cytochrome c biogenesis protein CcsA (Mesostigma viride (Green alga)).